We begin with the raw amino-acid sequence, 1658 residues long: Protein TIC 214 (1658 aa).

6 consecutive transmembrane segments (helical) span residues 28-48 (FGLY…ILTI), 52-72 (LLGG…GQLI), 82-102 (IYVM…YMLF), 130-150 (IFLD…SPVF), 165-185 (ISFV…FINL), and 199-219 (VNYP…ILAL).

The protein belongs to the TIC214 family. As to quaternary structure, part of the Tic complex.

The protein localises to the plastid. It is found in the chloroplast inner membrane. Involved in protein precursor import into chloroplasts. May be part of an intermediate translocation complex acting as a protein-conducting channel at the inner envelope. The chain is Protein TIC 214 from Huperzia lucidula (Shining clubmoss).